A 135-amino-acid chain; its full sequence is MLSPKRTRFRKQHRGRMKGISYRGNRICFGRYALQALEPAWITSRQIEAGRRAMTRNVRRGGKIWVRIFPDKPVTVRPTETRMGSGKGSPEYWVAVVKPGRILYEMSGVAENIARKAISIVASKMPIKTQFIISG.

It belongs to the universal ribosomal protein uL16 family. Part of the 50S ribosomal subunit.

The protein resides in the plastid. It localises to the chloroplast. The chain is Large ribosomal subunit protein uL16c from Gossypium barbadense (Sea Island cotton).